The following is a 380-amino-acid chain: L-lactate dehydrogenase (380 aa).

The 380-residue stretch at 1-380 (MIISASTDYR…SADSLVQGLR (380 aa)) folds into the FMN hydroxy acid dehydrogenase domain. Residue Y24 participates in substrate binding. S106 and Q127 together coordinate FMN. Residue Y129 participates in substrate binding. T155 is an FMN binding site. Residue R164 participates in substrate binding. K251 provides a ligand contact to FMN. Catalysis depends on H275, which acts as the Proton acceptor. R278 contacts substrate. 306-330 (DSGIRSGLDVVRMIALGADGVLLGR) contributes to the FMN binding site.

Belongs to the FMN-dependent alpha-hydroxy acid dehydrogenase family. FMN is required as a cofactor.

It localises to the cell inner membrane. It catalyses the reaction (S)-lactate + A = pyruvate + AH2. In terms of biological role, catalyzes the conversion of L-lactate to pyruvate. Is coupled to the respiratory chain. In Serratia proteamaculans (strain 568), this protein is L-lactate dehydrogenase.